The primary structure comprises 217 residues: 7-cyano-7-deazaguanine synthase (217 aa).

An ATP-binding site is contributed by F10 to L20. Zn(2+)-binding residues include C185, C194, C197, and C200.

It belongs to the QueC family. As to quaternary structure, homodimer. Zn(2+) is required as a cofactor.

The catalysed reaction is 7-carboxy-7-deazaguanine + NH4(+) + ATP = 7-cyano-7-deazaguanine + ADP + phosphate + H2O + H(+). It participates in purine metabolism; 7-cyano-7-deazaguanine biosynthesis. In terms of biological role, catalyzes the ATP-dependent conversion of 7-carboxy-7-deazaguanine (CDG) to 7-cyano-7-deazaguanine (preQ(0)). This chain is 7-cyano-7-deazaguanine synthase, found in Streptococcus mutans serotype c (strain ATCC 700610 / UA159).